A 624-amino-acid chain; its full sequence is MIAYDKSYDVVVVGGGHAGCEAALAAARMGCCTLLLSINLDAIALMSCNPAIGGLAKGHLVKEIDALGGEMAKNIDATGIQFRILNTKKGPAVRASRAQADKQQYRLRMKRILEHQDKLDLKQAEVTSLLVEDGNVVGVDTKAGVRYLGKTIILTTGTFMRGLIHIGLTHYPGGRAGDLPSVGLSVSLEECGFKVGRLKTGTPARLDGRTIDFSRLEPQYGDNPPIPFSFSTDKITQSQVPCHIAYTNERSHDIIRSGLDRSPLYSGIIEGVGPRYCPSIEDKVVRFPEKDRHQTFIEPEGVDTVEVYPSGLSTSLPIDVQWAFYRSIYGLERVEIMRPAYAIEYDYVDPIQLHASLETKVVGNLYHAGQINGTSGYEEAAAQGLIAGINAALRVQGKEPLILGRNDAYIGVMIDDLVTLGSKEPYRMFTSRAEYRLLLREDNADLRLCEKGYAIGLVREEEYRRFHAKKNMIEEELQRLRQEKLLPSEADDVFMEEFGLTGMQNAMTYEQLLRRPDIDSRELARIDKHIMEIPAAVREQVEIQIKYQGYIDRQLEQVERARKLESAKIPGDLEYAGLPGLSAEVREKLQQFRPDTLGQASRIPGVTPAAITILSIALKARNGR.

Residues 14-19 (GGGHAG), Val126, and Ser181 contribute to the FAD site. An NAD(+)-binding site is contributed by 273 to 287 (GPRYCPSIEDKVVRF). FAD is bound at residue Gln370.

This sequence belongs to the MnmG family. Homodimer. Heterotetramer of two MnmE and two MnmG subunits. It depends on FAD as a cofactor.

It localises to the cytoplasm. NAD-binding protein involved in the addition of a carboxymethylaminomethyl (cmnm) group at the wobble position (U34) of certain tRNAs, forming tRNA-cmnm(5)s(2)U34. This is tRNA uridine 5-carboxymethylaminomethyl modification enzyme MnmG from Geotalea uraniireducens (strain Rf4) (Geobacter uraniireducens).